Consider the following 554-residue polypeptide: CTP synthase (554 aa).

Positions M1–L265 are amidoligase domain. S13 serves as a coordination point for CTP. S13 contributes to the UTP binding site. Residues S14–I19 and D71 each bind ATP. Positions 71 and 139 each coordinate Mg(2+). Residues D146 to E148, K186 to Q191, and K222 contribute to the CTP site. UTP contacts are provided by residues K186 to Q191 and K222. The Glutamine amidotransferase type-1 domain occupies N292–G545. G353 serves as a coordination point for L-glutamine. The active-site Nucleophile; for glutamine hydrolysis is the C380. Residues Y381–Q384, E404, and R471 contribute to the L-glutamine site. Catalysis depends on residues H518 and E520.

This sequence belongs to the CTP synthase family. Homotetramer.

It carries out the reaction UTP + L-glutamine + ATP + H2O = CTP + L-glutamate + ADP + phosphate + 2 H(+). The enzyme catalyses L-glutamine + H2O = L-glutamate + NH4(+). It catalyses the reaction UTP + NH4(+) + ATP = CTP + ADP + phosphate + 2 H(+). Its pathway is pyrimidine metabolism; CTP biosynthesis via de novo pathway; CTP from UDP: step 2/2. With respect to regulation, allosterically activated by GTP, when glutamine is the substrate; GTP has no effect on the reaction when ammonia is the substrate. The allosteric effector GTP functions by stabilizing the protein conformation that binds the tetrahedral intermediate(s) formed during glutamine hydrolysis. Inhibited by the product CTP, via allosteric rather than competitive inhibition. In terms of biological role, catalyzes the ATP-dependent amination of UTP to CTP with either L-glutamine or ammonia as the source of nitrogen. Regulates intracellular CTP levels through interactions with the four ribonucleotide triphosphates. The chain is CTP synthase from Xanthomonas axonopodis pv. citri (strain 306).